Consider the following 131-residue polypeptide: uncharacterized protein (131 aa).

The protein resides in the mitochondrion. This is an uncharacterized protein from Arabidopsis thaliana (Mouse-ear cress).